Consider the following 204-residue polypeptide: Urease accessory protein UreG (204 aa).

12–19 (GPVGSGKT) contributes to the GTP binding site.

It belongs to the SIMIBI class G3E GTPase family. UreG subfamily. In terms of assembly, homodimer. UreD, UreF and UreG form a complex that acts as a GTP-hydrolysis-dependent molecular chaperone, activating the urease apoprotein by helping to assemble the nickel containing metallocenter of UreC. The UreE protein probably delivers the nickel.

It is found in the cytoplasm. Its function is as follows. Facilitates the functional incorporation of the urease nickel metallocenter. This process requires GTP hydrolysis, probably effectuated by UreG. This Streptococcus salivarius (strain 57.I) protein is Urease accessory protein UreG.